The primary structure comprises 492 residues: Protein GvpD2 (492 aa).

39–46 is an ATP binding site; it reads GAPGTGKT. Residues 355-368 show a composition bias toward basic and acidic residues; that stretch reads RDHDDAVDPDRLPG. Residues 355 to 379 form a disordered region; the sequence is RDHDDAVDPDRLPGHDTTPTEHGTL.

The protein belongs to the gas vesicle GvpD family. As to quaternary structure, homodimer. Interacts with GvpE, also with GvpE from H.mediterranei.

The protein resides in the cytoplasm. Its function is as follows. Causes a decrease in the amount of GvpE protein. Gas vesicles are hollow, gas filled proteinaceous nanostructures found in several microbial planktonic microorganisms. They allow positioning of halobacteria at the optimal depth for growth in the poorly aerated, shallow brine pools of their habitat. In terms of biological role, expression of 2 c-vac DNA fragments containing 2 divergently transcribed regions (gvpE-gvpF-gvpG-gvpH-gvpI-gvpJ-gvpK-gvpL-gvpM and gvpA-gvpC-gvpN-gvpO) allows H.volcanii to produce gas vesicles. The chain is Protein GvpD2 from Halobacterium salinarum (strain ATCC 700922 / JCM 11081 / NRC-1) (Halobacterium halobium).